Consider the following 358-residue polypeptide: MKVLAAMSGGVDSSVAAARMVDAGHDVVGVHLALSTVSGTLRTGSRGCCSKEDVSDARRVADVLGIPFYVWDFAEKFQEDVIDNFVSAYARGETPNPCVQCNQRIKFSALSVRALMLGFDTVATGHYARLSGGRLRRAVDRGKDQSYVLAVLTAQQLRHAAFPIGDTLKRQVRAEAARRGLLVADKPDSHGICFIPSGNTRAFLSECIGIRRGSVVDADGTVLAEHDGVHGFTVGQRKGLGIVGPGPNGRPRYVTAIDADTATVYVGDAADLGVHTLIGRAPVFTAGAAPLGPVQCVVQIRAHGETAVAVVELIGDELFVRLCEPLRGVARGQTLVLYRLDPDGDEVLGSATIASMSA.

Residues 6–13 (AMSGGVDS) and leucine 32 each bind ATP. The active-site Nucleophile is cysteine 101. A disulfide bridge links cysteine 101 with cysteine 193. ATP is bound at residue glycine 125. The tract at residues 143–145 (KDQ) is interaction with tRNA. The Cysteine persulfide intermediate role is filled by cysteine 193.

Belongs to the MnmA/TRMU family.

It is found in the cytoplasm. It carries out the reaction S-sulfanyl-L-cysteinyl-[protein] + uridine(34) in tRNA + AH2 + ATP = 2-thiouridine(34) in tRNA + L-cysteinyl-[protein] + A + AMP + diphosphate + H(+). Functionally, catalyzes the 2-thiolation of uridine at the wobble position (U34) of tRNA, leading to the formation of s(2)U34. This chain is tRNA-specific 2-thiouridylase MnmA, found in Mycobacterium leprae (strain Br4923).